Here is a 110-residue protein sequence, read N- to C-terminus: Large ribosomal subunit protein uL22 (110 aa).

The protein belongs to the universal ribosomal protein uL22 family. Part of the 50S ribosomal subunit.

Its function is as follows. This protein binds specifically to 23S rRNA; its binding is stimulated by other ribosomal proteins, e.g. L4, L17, and L20. It is important during the early stages of 50S assembly. It makes multiple contacts with different domains of the 23S rRNA in the assembled 50S subunit and ribosome. The globular domain of the protein is located near the polypeptide exit tunnel on the outside of the subunit, while an extended beta-hairpin is found that lines the wall of the exit tunnel in the center of the 70S ribosome. This Methylococcus capsulatus (strain ATCC 33009 / NCIMB 11132 / Bath) protein is Large ribosomal subunit protein uL22.